The chain runs to 103 residues: Small ribosomal subunit protein uS10 (103 aa).

Belongs to the universal ribosomal protein uS10 family. In terms of assembly, part of the 30S ribosomal subunit.

Functionally, involved in the binding of tRNA to the ribosomes. The chain is Small ribosomal subunit protein uS10 from Chlorobium limicola (strain DSM 245 / NBRC 103803 / 6330).